We begin with the raw amino-acid sequence, 156 residues long: Lipoprotein signal peptidase (156 aa).

The next 3 helical transmembrane spans lie at 5–25 (FKFIFYFWGAFVLVFALDQWV), 64–84 (YLHLALIGVLFIYLFWQKTLL), and 89–109 (IAFGMMLGAGVSNLLDRFIYG). Catalysis depends on residues Asp113 and Asp130. Residues 122–142 (NFAIFNVADVMINISVALILI) form a helical membrane-spanning segment.

The protein belongs to the peptidase A8 family.

It is found in the cell inner membrane. It catalyses the reaction Release of signal peptides from bacterial membrane prolipoproteins. Hydrolyzes -Xaa-Yaa-Zaa-|-(S,diacylglyceryl)Cys-, in which Xaa is hydrophobic (preferably Leu), and Yaa (Ala or Ser) and Zaa (Gly or Ala) have small, neutral side chains.. Its pathway is protein modification; lipoprotein biosynthesis (signal peptide cleavage). This protein specifically catalyzes the removal of signal peptides from prolipoproteins. The sequence is that of Lipoprotein signal peptidase from Campylobacter jejuni subsp. doylei (strain ATCC BAA-1458 / RM4099 / 269.97).